We begin with the raw amino-acid sequence, 303 residues long: Probable cell division protein WhiA (303 aa).

A DNA-binding region (H-T-H motif) is located at residues 272 to 303 (SIQQIADSLAVPLTKSGVNHRLRKINKIAEDL).

This sequence belongs to the WhiA family.

Functionally, involved in cell division and chromosome segregation. The sequence is that of Probable cell division protein WhiA from Streptococcus mutans serotype c (strain ATCC 700610 / UA159).